The primary structure comprises 164 residues: Single-stranded DNA-binding protein 2 (164 aa).

The 105-residue stretch at 5-109 (INKVILVGNL…IVADEMQMLG (105 aa)) folds into the SSB domain. A disordered region spans residues 105-164 (MQMLGGRSDGGGMGGGGERPQRQTSQRQDYAPRRQARQPSQSPQSSPPPMDDFADDDIPF). Residues 111-122 (RSDGGGMGGGGE) show a composition bias toward gly residues. The short motif at 159–164 (DDDIPF) is the Important for interaction with partner proteins element.

Homotetramer.

Its function is as follows. Plays an important role in DNA replication, recombination and repair. Binds to ssDNA and to an array of partner proteins to recruit them to their sites of action during DNA metabolism. This is Single-stranded DNA-binding protein 2 (ssb2) from Xylella fastidiosa (strain 9a5c).